The sequence spans 370 residues: Probable G-protein coupled receptor 85 (370 aa).

The Extracellular segment spans residues 1-25 (MANYSHAADNILQNLSPLTAFLKLT). N3 carries N-linked (GlcNAc...) asparagine glycosylation. The helical transmembrane segment at 26 to 46 (SLGFIIGVSVVGNLLISILLV) threads the bilayer. Residues 47–57 (KDKTLHRAPYY) are Cytoplasmic-facing. Residues 58 to 78 (FLLDLCCSDILRSAICFPFVF) traverse the membrane as a helical segment. The Extracellular portion of the chain corresponds to 79–96 (NSVKNGSTWTYGTLTCKV). N83 is a glycosylation site (N-linked (GlcNAc...) asparagine). C94 and C172 are joined by a disulfide. The chain crosses the membrane as a helical span at residues 97–117 (IAFLGVLSCFHTAFMLFCISV). The Cytoplasmic segment spans residues 118 to 137 (TRYLAIAHHRFYTKRLTFWT). The chain crosses the membrane as a helical span at residues 138-158 (CLAVICMVWTLSVAMAFPPVL). At 159-188 (DVGTYSFIREEDQCTFQHRSFRANDSLGFM) the chain is on the extracellular side. N-linked (GlcNAc...) asparagine glycosylation occurs at N182. A helical membrane pass occupies residues 189–209 (LLLALILLATQLVYLKLIFFV). Residues 210–286 (HDRRKMKPVQ…FKMEKRISRM (77 aa)) lie on the Cytoplasmic side of the membrane. A helical transmembrane segment spans residues 287-307 (FYIMTFLFLTLWGPYLVACYW). Residues 308-313 (RVFARG) are Extracellular-facing. Residues 314–334 (PVVPGGFLTAAVWMSFAQAGI) traverse the membrane as a helical segment. The Cytoplasmic segment spans residues 335-370 (NPFVCIFSNRELRRCFSTTLLYCRKSRLPREPYCVI).

Belongs to the G-protein coupled receptor 1 family. Interacts with DLG4 and DLG3. As to expression, highly expressed in brain and testis. Lower levels in small intestine, placenta and spleen. In brain regions, detected in all regions tested, but somewhat lower levels in the corpus callosum, medulla and spinal cord.

The protein resides in the cell membrane. It is found in the endoplasmic reticulum. Orphan receptor. In Homo sapiens (Human), this protein is Probable G-protein coupled receptor 85 (GPR85).